Here is a 170-residue protein sequence, read N- to C-terminus: Helix-loop-helix protein 3 (170 aa).

Residues 1–26 (MTASTSSTPSTSTKIPSSSKSSVTKQ) are compositionally biased toward low complexity. 2 disordered regions span residues 1–42 (MTAS…VDQV) and 118–170 (TPSP…TETY). The segment at 26 to 39 (QTKQKRNERERKRV) is basic motif; degenerate. A bHLH domain is found at 26–79 (QTKQKRNERERKRVDQVNQGFVLLQERVPKAAGNKAKLSKVETLREAARYIQEL). Positions 30 to 40 (KRNERERKRVD) are enriched in basic and acidic residues. Residues 40–79 (DQVNQGFVLLQERVPKAAGNKAKLSKVETLREAARYIQEL) form a helix-loop-helix motif region. The span at 143 to 157 (SHYYQESSSSSASTS) shows a compositional bias: low complexity.

As to quaternary structure, efficient DNA binding requires dimerization with another bHLH protein. Forms a heterodimer with hlh-2. Expressed in the ADL sensory neurons.

Its subcellular location is the nucleus. In terms of biological role, probable transcriptional regulator. May mediate transcriptional activation by binding to the E-box motif 5'-CANNTG-3'. Plays a role in the differentiation of the hermaphrodite-specific motor neurons (HSN) that are required for normal egg laying. Might play a role in serotonin production by regulating expression of the tryptophan hydrolase tph-1 which catalyzes serotonin synthesis, in the HSN neurons. Also plays a role in HSN axon guidance towards the vulva and the ventral nerve cord, possibly by promoting the expression of the netrin receptor unc-40. Under feeding conditions, involved in the regulation of the srh-234 chemoreceptor encoding gene expression in the ADL sensory neurons. Together with hlh-2, involved in the induction of programmed cell death in the sister cells of the serotonergic neurosecretory motor (NSM) neurons, probably through the activation of egl-1 transcription. The chain is Helix-loop-helix protein 3 from Caenorhabditis elegans.